The sequence spans 49 residues: Photosystem II reaction center protein K (49 aa).

A propeptide spanning residues 1-12 is cleaved from the precursor; it reads MISSIHLRKLLG. The chain crosses the membrane as a helical span at residues 24-44; that stretch reads IIDVLPIIPVLFLLLAFVWQA.

Belongs to the PsbK family. PSII is composed of 1 copy each of membrane proteins PsbA, PsbB, PsbC, PsbD, PsbE, PsbF, PsbH, PsbI, PsbJ, PsbK, PsbL, PsbM, PsbT, PsbX, PsbY, PsbZ, Psb30/Ycf12, at least 3 peripheral proteins of the oxygen-evolving complex and a large number of cofactors. It forms dimeric complexes.

The protein resides in the plastid. It localises to the chloroplast thylakoid membrane. In terms of biological role, one of the components of the core complex of photosystem II (PSII). PSII is a light-driven water:plastoquinone oxidoreductase that uses light energy to abstract electrons from H(2)O, generating O(2) and a proton gradient subsequently used for ATP formation. It consists of a core antenna complex that captures photons, and an electron transfer chain that converts photonic excitation into a charge separation. In Phacus acuminatus, this protein is Photosystem II reaction center protein K.